Consider the following 412-residue polypeptide: Major facilitator superfamily domain-containing protein 3 (412 aa).

Helical transmembrane passes span 10–30, 40–60, 68–88, 99–119, 152–172, 173–193, 204–224, 252–272, 291–311, 320–340, 361–381, and 384–404; these read GLYL…PILL, VGLT…APLV, VWLT…AVLP, TTVM…DVAL, GGLL…LLAA, TYWL…LPWP, YLLQ…FVLT, LWSG…GGAL, LGSL…GASV, AVLL…TATF, FLAT…GVLA, and LGPH…VLDL.

The protein belongs to the major facilitator superfamily. In brain, expressed in the cortex, striatum, hippocampus, hypothalamus, thalamus and cerebellum (at protein level). Widely expressed with highest levels in kidney and liver.

The protein resides in the membrane. This Mus musculus (Mouse) protein is Major facilitator superfamily domain-containing protein 3 (Mfsd3).